The sequence spans 1103 residues: Mediator of RNA polymerase II transcription subunit 14 (1103 aa).

Disordered stretches follow at residues Met1 to Gln63, Val120 to Gln140, and Leu1054 to Asp1103. Positions Ser1073 to Asp1103 are enriched in polar residues.

This sequence belongs to the Mediator complex subunit 14 family. In terms of assembly, component of the Mediator complex.

It localises to the nucleus. Functionally, component of the Mediator complex, a coactivator involved in the regulated transcription of nearly all RNA polymerase II-dependent genes. Mediator functions as a bridge to convey information from gene-specific regulatory proteins to the basal RNA polymerase II transcription machinery. Mediator is recruited to promoters by direct interactions with regulatory proteins and serves as a scaffold for the assembly of a functional preinitiation complex with RNA polymerase II and the general transcription factors. The protein is Mediator of RNA polymerase II transcription subunit 14 (rgr1) of Aspergillus terreus (strain NIH 2624 / FGSC A1156).